Here is a 1226-residue protein sequence, read N- to C-terminus: Methionine synthase (1226 aa).

Residues 7–327 (KVQIEKQLSE…EHIRQMALVV (321 aa)) form the Hcy-binding domain. 3 residues coordinate Zn(2+): Cys-249, Cys-312, and Cys-313. Residues 358-619 (FINVGERTNV…VPEDLREAVE (262 aa)) enclose the Pterin-binding domain. In terms of domain architecture, B12-binding N-terminal spans 652–746 (SALEWRDWPV…FINASKEVGA (95 aa)). Methylcob(III)alamin contacts are provided by residues Glu-696, 758 to 762 (GDVHD), His-761, Ser-806, Thr-810, and Ala-862. Residues 748–883 (NGKILLATVK…SNELKPSFVE (136 aa)) form the B12-binding domain. The AdoMet activation domain maps to 899 to 1226 (KQPRTKPVTL…AEKWLGPNLN (328 aa)). Residues Asp-949, Arg-1137, and 1192–1193 (YF) each bind S-adenosyl-L-methionine.

Belongs to the vitamin-B12 dependent methionine synthase family. Methylcob(III)alamin is required as a cofactor. It depends on Zn(2+) as a cofactor.

The catalysed reaction is (6S)-5-methyl-5,6,7,8-tetrahydrofolate + L-homocysteine = (6S)-5,6,7,8-tetrahydrofolate + L-methionine. It functions in the pathway amino-acid biosynthesis; L-methionine biosynthesis via de novo pathway; L-methionine from L-homocysteine (MetH route): step 1/1. Catalyzes the transfer of a methyl group from methyl-cobalamin to homocysteine, yielding enzyme-bound cob(I)alamin and methionine. Subsequently, remethylates the cofactor using methyltetrahydrofolate. This chain is Methionine synthase (metH), found in Aliivibrio fischeri (Vibrio fischeri).